Here is a 503-residue protein sequence, read N- to C-terminus: Poxin-Schlafen (503 aa).

Positions 1–236 (MFYAHAFGGY…SKEERVDYVL (236 aa)) are poxin-like. The active-site Proton donor is the His15. Tyr136 serves as the catalytic Shared with catalytic histidine of dimeric partner. The active-site Proton acceptor; shared with catalytic histidine of dimeric partner is Lys140. Residues 237–503 (MKRLESIHHL…PDEWVSHIKF (267 aa)) are schlafen-like.

In the N-terminal section; belongs to the poxin family. It in the C-terminal section; belongs to the Schlafen protein family. Subgroup poxviridae B3 subfamily. Homodimer.

It catalyses the reaction 2',3'-cGAMP + H2O = Gp(2'-5')Ap(3') + H(+). In terms of biological role, nuclease that is responsible for viral evasion of host cGAS-STING innate immunity. Cleaves 2',3'-cGAMP which is produced by host cGAS following recognition of intracellular foreign DNA and blocks the subsequent 2',3'-cGAMP-mediated activation of TMEM173/STING which normally spreads to adjacent cells and activates the interferon and NF-kappa-B immune responses. In Cynomys gunnisoni (Gunnison's prairie dog), this protein is Poxin-Schlafen (OPG188).